Here is a 337-residue protein sequence, read N- to C-terminus: Ribosomal RNA small subunit methyltransferase C (337 aa).

It belongs to the methyltransferase superfamily. RsmC family. In terms of assembly, monomer.

Its subcellular location is the cytoplasm. It carries out the reaction guanosine(1207) in 16S rRNA + S-adenosyl-L-methionine = N(2)-methylguanosine(1207) in 16S rRNA + S-adenosyl-L-homocysteine + H(+). In terms of biological role, specifically methylates the guanine in position 1207 of 16S rRNA in the 30S particle. The polypeptide is Ribosomal RNA small subunit methyltransferase C (Acinetobacter baumannii (strain ATCC 17978 / DSM 105126 / CIP 53.77 / LMG 1025 / NCDC KC755 / 5377)).